The primary structure comprises 143 residues: NADH-quinone oxidoreductase subunit A (143 aa).

3 consecutive transmembrane segments (helical) span residues 8-28, 63-83, and 93-113; these read FGNV…GYLT, FYVV…LFPW, and FALI…VYAW.

It belongs to the complex I subunit 3 family. As to quaternary structure, NDH-1 is composed of 14 different subunits. Subunits NuoA, H, J, K, L, M, N constitute the membrane sector of the complex.

It localises to the cell inner membrane. The enzyme catalyses a quinone + NADH + 5 H(+)(in) = a quinol + NAD(+) + 4 H(+)(out). Functionally, NDH-1 shuttles electrons from NADH, via FMN and iron-sulfur (Fe-S) centers, to quinones in the respiratory chain. The immediate electron acceptor for the enzyme in this species is believed to be a menaquinone. Couples the redox reaction to proton translocation (for every two electrons transferred, four hydrogen ions are translocated across the cytoplasmic membrane), and thus conserves the redox energy in a proton gradient. The sequence is that of NADH-quinone oxidoreductase subunit A from Chlorobium luteolum (strain DSM 273 / BCRC 81028 / 2530) (Pelodictyon luteolum).